The following is a 154-amino-acid chain: Ascorbate-specific PTS system EIIA component (154 aa).

The region spanning 6–150 (SLAENNSIRL…QEVLDLIDRT (145 aa)) is the PTS EIIA type-2 domain. Residue His-68 is the Tele-phosphohistidine intermediate of the active site. His-68 carries the post-translational modification Phosphohistidine.

It is found in the cytoplasm. Functionally, the phosphoenolpyruvate-dependent sugar phosphotransferase system (sugar PTS), a major carbohydrate active transport system, catalyzes the phosphorylation of incoming sugar substrates concomitantly with their translocation across the cell membrane. The enzyme II UlaABC PTS system is involved in ascorbate transport. This Salmonella paratyphi A (strain ATCC 9150 / SARB42) protein is Ascorbate-specific PTS system EIIA component (ulaC).